A 211-amino-acid chain; its full sequence is Riboflavin kinase (211 aa).

The H-T-H motif-like stretch occupies residues 1 to 85 (MKKILMLIEL…CDKISNALSK (85 aa)). The riboflavin kinase stretch occupies residues 86–211 (GVIVGEVVSG…GDRVRLEVIQ (126 aa)). Position 95-100 (95-100 (GLGEGA)) interacts with CDP. Thr-122 and Asn-124 together coordinate Mg(2+). FMN contacts are provided by Thr-178 and Glu-186. 191-194 (VNLR) provides a ligand contact to CDP.

It belongs to the archaeal riboflavin kinase family. Requires Mg(2+) as cofactor.

The catalysed reaction is riboflavin + CTP = CDP + FMN + H(+). It functions in the pathway cofactor biosynthesis; FMN biosynthesis; FMN from riboflavin (CTP route): step 1/1. Catalyzes the CTP-dependent phosphorylation of riboflavin (vitamin B2) to form flavin mononucleotide (FMN). The protein is Riboflavin kinase (ribK) of Thermococcus kodakarensis (strain ATCC BAA-918 / JCM 12380 / KOD1) (Pyrococcus kodakaraensis (strain KOD1)).